Here is a 95-residue protein sequence, read N- to C-terminus: Pyruvate synthase subunit PorD (95 aa).

2 4Fe-4S ferredoxin-type domains span residues 34-63 (FRPV…PREN) and 64-93 (GFFE…MILE). 8 residues coordinate [4Fe-4S] cluster: cysteine 43, cysteine 46, cysteine 49, cysteine 53, cysteine 73, cysteine 76, cysteine 79, and cysteine 83.

As to quaternary structure, heterotetramer of one alpha, one beta, one delta and one gamma chain. The cofactor is [4Fe-4S] cluster.

The sequence is that of Pyruvate synthase subunit PorD (porD) from Methanosarcina barkeri (strain Fusaro / DSM 804).